The sequence spans 206 residues: Large ribosomal subunit protein uL4 (206 aa).

A compositionally biased stretch (polar residues) spans 42 to 54; the sequence is RRQQGTHQSQGRS. A disordered region spans residues 42 to 93; the sequence is RRQQGTHQSQGRSDVSRTGAKMFKQKGTGRARHSSARAPQFRGGGKAHGPVV. The segment covering 64–76 has biased composition (basic residues); sequence FKQKGTGRARHSS.

The protein belongs to the universal ribosomal protein uL4 family. In terms of assembly, part of the 50S ribosomal subunit.

In terms of biological role, one of the primary rRNA binding proteins, this protein initially binds near the 5'-end of the 23S rRNA. It is important during the early stages of 50S assembly. It makes multiple contacts with different domains of the 23S rRNA in the assembled 50S subunit and ribosome. Forms part of the polypeptide exit tunnel. The sequence is that of Large ribosomal subunit protein uL4 from Bartonella henselae (strain ATCC 49882 / DSM 28221 / CCUG 30454 / Houston 1) (Rochalimaea henselae).